A 141-amino-acid chain; its full sequence is ATP synthase epsilon chain (141 aa).

This sequence belongs to the ATPase epsilon chain family. F-type ATPases have 2 components, CF(1) - the catalytic core - and CF(0) - the membrane proton channel. CF(1) has five subunits: alpha(3), beta(3), gamma(1), delta(1), epsilon(1). CF(0) has three main subunits: a, b and c.

The protein localises to the cell inner membrane. Its function is as follows. Produces ATP from ADP in the presence of a proton gradient across the membrane. The chain is ATP synthase epsilon chain from Halorhodospira halophila (strain DSM 244 / SL1) (Ectothiorhodospira halophila (strain DSM 244 / SL1)).